A 274-amino-acid chain; its full sequence is 2,3,4,5-tetrahydropyridine-2,6-dicarboxylate N-succinyltransferase (274 aa).

Substrate is bound by residues Arg-106 and Asp-143.

This sequence belongs to the transferase hexapeptide repeat family. Homotrimer.

Its subcellular location is the cytoplasm. The catalysed reaction is (S)-2,3,4,5-tetrahydrodipicolinate + succinyl-CoA + H2O = (S)-2-succinylamino-6-oxoheptanedioate + CoA. The protein operates within amino-acid biosynthesis; L-lysine biosynthesis via DAP pathway; LL-2,6-diaminopimelate from (S)-tetrahydrodipicolinate (succinylase route): step 1/3. The protein is 2,3,4,5-tetrahydropyridine-2,6-dicarboxylate N-succinyltransferase of Rickettsia prowazekii (strain Madrid E).